The sequence spans 332 residues: Probable allantoicase (332 aa).

The protein belongs to the allantoicase family.

The enzyme catalyses allantoate + H2O = (S)-ureidoglycolate + urea. The protein operates within nitrogen metabolism; (S)-allantoin degradation; (S)-ureidoglycolate from allantoate (aminidohydrolase route): step 1/1. This Pseudomonas aeruginosa (strain LESB58) protein is Probable allantoicase.